Reading from the N-terminus, the 483-residue chain is O-acetyltransferase pboB (483 aa).

Belongs to the fumigaclavine B O-acetyltransferase family. In terms of assembly, monomer.

The protein operates within secondary metabolite biosynthesis. Its function is as follows. O-acetyltransferase; part of the gene cluster that mediates the biosynthesis of protubonine B, a hydroxylated and diacetylated cyclo-L-Trp-L-Leu derivative. Within the pathway, pboB catalyzes the acetylation of protubonine C at N-1 of the indoline ring to produce protubonine B. The first step of the protubonine B synthesis is performed by the nonribosomal peptide synthetase pboA that catalyzes the formation of cyclo-L-Trp-L-Leu by condensing L-Leu with L-Trp. The flavin-dependent monooxygenase pboD is responsible for hydroxylation at C-3 of the indole ring and subsequent formation of the pyrrolidine ring, leadind to protubonine D. Protubonine D is further diacetylated by two acetyltransferases, pboB and pboC, to form the final product protubonine B via protubonine C. The protein is O-acetyltransferase pboB of Aspergillus ustus.